A 408-amino-acid polypeptide reads, in one-letter code: LL-diaminopimelate aminotransferase (408 aa).

Positions 15 and 42 each coordinate substrate. Pyridoxal 5'-phosphate is bound by residues Tyr-72, Ser-108–Lys-109, Tyr-132, Asn-187, Tyr-218, and Ser-246–Ser-248. The substrate site is built by Lys-109, Tyr-132, and Asn-187. Lys-249 carries the N6-(pyridoxal phosphate)lysine modification. Pyridoxal 5'-phosphate contacts are provided by Arg-257 and Asn-292. Asn-292 and Arg-388 together coordinate substrate.

The protein belongs to the class-I pyridoxal-phosphate-dependent aminotransferase family. LL-diaminopimelate aminotransferase subfamily. Homodimer. Requires pyridoxal 5'-phosphate as cofactor.

The enzyme catalyses (2S,6S)-2,6-diaminopimelate + 2-oxoglutarate = (S)-2,3,4,5-tetrahydrodipicolinate + L-glutamate + H2O + H(+). The protein operates within amino-acid biosynthesis; L-lysine biosynthesis via DAP pathway; LL-2,6-diaminopimelate from (S)-tetrahydrodipicolinate (aminotransferase route): step 1/1. Involved in the synthesis of meso-diaminopimelate (m-DAP or DL-DAP), required for both lysine and peptidoglycan biosynthesis. Catalyzes the direct conversion of tetrahydrodipicolinate to LL-diaminopimelate. This Synechococcus sp. (strain CC9311) protein is LL-diaminopimelate aminotransferase.